A 488-amino-acid chain; its full sequence is MTELAAVSFVYPDLDALAAETAKIAVLVPAEGTLNPGARRLNRLTKGAVARAVESAAFEKLKSGESLSLGYPAGMASDEVILVKLARNAKPLEARKAGAGLGKTLGKEGLLIWAAGLGQVAELAFGAALRAYRFDARKSKSEDALGPITVCATKRDEAEAAFADRRAVAEGVFFTRDLVNEPANVLTTTEFADRLTAMADLGLEVSVLEEADMEKLGMGALLGVGQGSESPSKIVVMKWMGGGDGAPFALVGKGVVFDTGGISIKPSAGMEDMTMDMGGAGVVAGVMRTLALRKAKANVVGLVGLVENMPDGKAQRPGDVVTSMKGDTIEVINTDAEGRLVLADVMWYAQEEFKPCAMIDLATLTGAIIIGLGHENAGVFSNSDDLSGAFLKAATAEGEGAWRMPMGPAYDKLIKSRVADIKNVGGRAAGSITAAQFLGRFVKDETPWCHLDIAGTASVSSATDYAPAGATGWGVRALDRLIRDGYEG.

Lysine 253 and aspartate 258 together coordinate Mn(2+). Lysine 265 is a catalytic residue. Positions 276, 335, and 337 each coordinate Mn(2+). Arginine 339 is an active-site residue.

Belongs to the peptidase M17 family. Requires Mn(2+) as cofactor.

Its subcellular location is the cytoplasm. It catalyses the reaction Release of an N-terminal amino acid, Xaa-|-Yaa-, in which Xaa is preferably Leu, but may be other amino acids including Pro although not Arg or Lys, and Yaa may be Pro. Amino acid amides and methyl esters are also readily hydrolyzed, but rates on arylamides are exceedingly low.. It carries out the reaction Release of an N-terminal amino acid, preferentially leucine, but not glutamic or aspartic acids.. Its function is as follows. Presumably involved in the processing and regular turnover of intracellular proteins. Catalyzes the removal of unsubstituted N-terminal amino acids from various peptides. The chain is Probable cytosol aminopeptidase from Dinoroseobacter shibae (strain DSM 16493 / NCIMB 14021 / DFL 12).